A 271-amino-acid chain; its full sequence is NH(3)-dependent NAD(+) synthetase (271 aa).

43-50 (GISGGQDS) lines the ATP pocket. Asp-49 contacts Mg(2+). Arg-137 provides a ligand contact to deamido-NAD(+). Thr-157 contributes to the ATP binding site. Glu-162 provides a ligand contact to Mg(2+). Deamido-NAD(+)-binding residues include Lys-170 and Asp-177. Residues Lys-186 and Thr-208 each coordinate ATP. A deamido-NAD(+)-binding site is contributed by 257-258 (HK).

The protein belongs to the NAD synthetase family. Homodimer.

The enzyme catalyses deamido-NAD(+) + NH4(+) + ATP = AMP + diphosphate + NAD(+) + H(+). It functions in the pathway cofactor biosynthesis; NAD(+) biosynthesis; NAD(+) from deamido-NAD(+) (ammonia route): step 1/1. Its function is as follows. Catalyzes the ATP-dependent amidation of deamido-NAD to form NAD. Uses ammonia as a nitrogen source. The sequence is that of NH(3)-dependent NAD(+) synthetase from Exiguobacterium sibiricum (strain DSM 17290 / CCUG 55495 / CIP 109462 / JCM 13490 / 255-15).